The following is a 166-amino-acid chain: UPF0561 protein C2orf68 homolog (166 aa).

Basic and acidic residues predominate over residues 32–49 (NQLDRDDYDKKVKQAAKE). The interval 32 to 107 (NQLDRDDYDK…SELEPPGRQL (76 aa)) is disordered. Residues 91-101 (ESSSSGSSELE) show a composition bias toward low complexity.

The protein belongs to the UPF0561 family.

The sequence is that of UPF0561 protein C2orf68 homolog from Mus musculus (Mouse).